Here is a 934-residue protein sequence, read N- to C-terminus: Pesticidal crystal protein Cry1Aa (934 aa).

Belongs to the delta endotoxin family.

Promotes colloidosmotic lysis by binding to the midgut epithelial cells of many lepidopteran larvae. The polypeptide is Pesticidal crystal protein Cry1Aa (cry1Aa) (Bacillus thuringiensis subsp. sotto).